We begin with the raw amino-acid sequence, 318 residues long: Isoflavone reductase (318 aa).

NADP(+) contacts are provided by residues G11–G17, R36, and K44. The active-site Proton acceptor is the K144. Residue R148 participates in NADP(+) binding.

Belongs to the NmrA-type oxidoreductase family. Isoflavone reductase subfamily.

The enzyme catalyses (3R)-vestitone + NADP(+) = 2'-hydroxyformononetin + NADPH + 2 H(+). It participates in phytoalexin biosynthesis; pterocarpan phytoalexin biosynthesis. Functionally, reduces achiral isoflavones to chiral isoflavanones during the biosynthesis of chiral pterocarpan phytoalexins. The reduction product is a third isomer, which represents the penultimate intermediate in the synthesis of the phytoalexin (-)-medicarpin, the major phytoalexin in Alfalfa. The chain is Isoflavone reductase from Medicago sativa (Alfalfa).